The primary structure comprises 394 residues: Elongation factor Tu 2 (394 aa).

Residues 10 to 204 enclose the tr-type G domain; that stretch reads KPHVNVGTIG…ALDTYIPEPE (195 aa). Positions 19–26 are G1; that stretch reads GHVDHGKT. A GTP-binding site is contributed by 19–26; that stretch reads GHVDHGKT. Thr26 serves as a coordination point for Mg(2+). The tract at residues 60-64 is G2; the sequence is GITIS. The G3 stretch occupies residues 81–84; that stretch reads DCPG. Residues 81-85 and 136-139 each bind GTP; these read DCPGH and NKCD. The segment at 136-139 is G4; the sequence is NKCD. The interval 174–176 is G5; it reads SAL.

The protein belongs to the TRAFAC class translation factor GTPase superfamily. Classic translation factor GTPase family. EF-Tu/EF-1A subfamily. Monomer.

The protein resides in the cytoplasm. It catalyses the reaction GTP + H2O = GDP + phosphate + H(+). GTP hydrolase that promotes the GTP-dependent binding of aminoacyl-tRNA to the A-site of ribosomes during protein biosynthesis. The sequence is that of Elongation factor Tu 2 from Vibrio vulnificus (strain CMCP6).